Reading from the N-terminus, the 433-residue chain is Protoheme IX farnesyltransferase 2 (433 aa).

The tract at residues 1-164 is unknown; sequence MQRFTGLVTA…LTKPRLMWLL (164 aa). The next 13 helical transmembrane spans lie at 4-24, 35-55, 67-87, 95-115, 160-180, 184-204, 236-256, 257-277, 282-304, 308-330, 357-377, 378-398, and 413-433; these read FTGL…LGVA, AVAH…AAAL, WGVT…MAVL, LHLF…TWHL, LMWL…VTGA, GVTI…AGTF, AFGV…VNPL, AAAL…VVLK, WNTV…AVAG, LPAL…NLAI, ILYW…VAGF, GPVY…TVVV, and HASN…TMVI. The segment at 165–430 is protoheme IX prenyltransferase; that stretch reads CLLALSGMAL…ALLVAILVET (266 aa).

In the C-terminal section; belongs to the UbiA prenyltransferase family. Protoheme IX farnesyltransferase subfamily.

It localises to the cell membrane. The catalysed reaction is heme b + (2E,6E)-farnesyl diphosphate + H2O = Fe(II)-heme o + diphosphate. Its pathway is porphyrin-containing compound metabolism; heme O biosynthesis; heme O from protoheme: step 1/1. Functionally, converts heme B (protoheme IX) to heme O by substitution of the vinyl group on carbon 2 of heme B porphyrin ring with a hydroxyethyl farnesyl side group. The protein is Protoheme IX farnesyltransferase 2 (ctaB2) of Natronomonas pharaonis (strain ATCC 35678 / DSM 2160 / CIP 103997 / JCM 8858 / NBRC 14720 / NCIMB 2260 / Gabara) (Halobacterium pharaonis).